Here is a 279-residue protein sequence, read N- to C-terminus: Oxygen-dependent coproporphyrinogen-III oxidase (279 aa).

Ser102 is a substrate binding site. Positions 106 and 116 each coordinate a divalent metal cation. The Proton donor role is filled by His116. Residue 118 to 120 (NTR) participates in substrate binding. 2 residues coordinate a divalent metal cation: His149 and His179. Positions 244-279 (YVEFNLLYDRGTKFGLMTDGNVEAILMSLPPEVKWA) are important for dimerization.

The protein belongs to the aerobic coproporphyrinogen-III oxidase family. As to quaternary structure, homodimer. A divalent metal cation is required as a cofactor.

It is found in the cytoplasm. It catalyses the reaction coproporphyrinogen III + O2 + 2 H(+) = protoporphyrinogen IX + 2 CO2 + 2 H2O. The protein operates within porphyrin-containing compound metabolism; protoporphyrin-IX biosynthesis; protoporphyrinogen-IX from coproporphyrinogen-III (O2 route): step 1/1. In terms of biological role, involved in the heme biosynthesis. Catalyzes the aerobic oxidative decarboxylation of propionate groups of rings A and B of coproporphyrinogen-III to yield the vinyl groups in protoporphyrinogen-IX. The polypeptide is Oxygen-dependent coproporphyrinogen-III oxidase (Rickettsia bellii (strain OSU 85-389)).